We begin with the raw amino-acid sequence, 487 residues long: 1-aminocyclopropane-1-carboxylate synthase 1 (487 aa).

Lysine 286 is subject to N6-(pyridoxal phosphate)lysine.

It belongs to the class-I pyridoxal-phosphate-dependent aminotransferase family. Homodimer. The cofactor is pyridoxal 5'-phosphate.

The enzyme catalyses S-adenosyl-L-methionine = 1-aminocyclopropane-1-carboxylate + S-methyl-5'-thioadenosine + H(+). It participates in alkene biosynthesis; ethylene biosynthesis via S-adenosyl-L-methionine; ethylene from S-adenosyl-L-methionine: step 1/2. Catalyzes the formation of 1-aminocyclopropane-1-carboxylate, a direct precursor of ethylene in higher plants. The chain is 1-aminocyclopropane-1-carboxylate synthase 1 (ACC1) from Oryza sativa subsp. indica (Rice).